The sequence spans 154 residues: MVKAVAVVRGDSKVQGTVHFEQESESAPTTISWEIEGNDPNALRGFHIHQFGDNTNGCTSAGPHFNPFGKQHGAPEDDERHVGDLGNISTDGNGVAKGTKQDLLIKLIGKDSILGRTIVVHAGTDDYGKGGFEDSKTTGHAGARPACGVIGLTQ.

H47, H49, and H64 together coordinate Cu cation. The cysteines at positions 58 and 147 are disulfide-linked. Zn(2+) contacts are provided by H64, H72, H81, and D84. Residue H121 participates in Cu cation binding. R144 is a binding site for substrate.

The protein belongs to the Cu-Zn superoxide dismutase family. As to quaternary structure, homodimer. Cu cation serves as cofactor. It depends on Zn(2+) as a cofactor.

The protein localises to the cytoplasm. It carries out the reaction 2 superoxide + 2 H(+) = H2O2 + O2. Functionally, destroys radicals which are normally produced within the cells and which are toxic to biological systems. In Candida albicans (Yeast), this protein is Superoxide dismutase [Cu-Zn] (SOD1).